Here is a 159-residue protein sequence, read N- to C-terminus: Phosphopantetheine adenylyltransferase (159 aa).

Thr-8 provides a ligand contact to substrate. Residues 8–9 (TF) and His-16 each bind ATP. Positions 40, 72, and 86 each coordinate substrate. ATP is bound by residues 87–89 (GLR), Glu-97, and 122–128 (YSFLSSS).

The protein belongs to the bacterial CoaD family. Homohexamer. It depends on Mg(2+) as a cofactor.

Its subcellular location is the cytoplasm. It carries out the reaction (R)-4'-phosphopantetheine + ATP + H(+) = 3'-dephospho-CoA + diphosphate. Its pathway is cofactor biosynthesis; coenzyme A biosynthesis; CoA from (R)-pantothenate: step 4/5. In terms of biological role, reversibly transfers an adenylyl group from ATP to 4'-phosphopantetheine, yielding dephospho-CoA (dPCoA) and pyrophosphate. The polypeptide is Phosphopantetheine adenylyltransferase (Prochlorococcus marinus subsp. pastoris (strain CCMP1986 / NIES-2087 / MED4)).